The sequence spans 401 residues: MTQDASPILTSLLDTDAYKLHMQQAVFHHYRHITVAAEFRCRSDELLGVYADEIRHQVTLMGQLALTSDEFIYLSSLPFFQDDYLHWLRDFRFKPEQVSVAVHDGKLDIRIAGLWCEVIMWEVPLLAVISEIVHRRRSTQVTTDQAVQQLRTKLEQFNALSADIDITHFKLMDFGTRRRFSREIQHTVVSTLKDEFPYLVGTSNYDLARTLALAPVGTQAHEWFQAHQQISPTLANSQRVALQVWLDEYPNQLGIALTDCITMDAFLRDFDLAFANRYQGLRHDSGDPIEWGEKAIAHYEKLGIDPMKKVLVFSDNLDLEKALFLYRHFYQRIKLVFGIGTRLTCDIPDVKPLNIVIKLVECNDKPVAKLSDSPGKTICQDPAFVDQLRKAFALPLVKKAS.

Histidine 221 carries the phosphohistidine; by autocatalysis modification.

This sequence belongs to the NAPRTase family. In terms of processing, transiently phosphorylated on a His residue during the reaction cycle. Phosphorylation strongly increases the affinity for substrates and increases the rate of nicotinate D-ribonucleotide production. Dephosphorylation regenerates the low-affinity form of the enzyme, leading to product release.

The catalysed reaction is nicotinate + 5-phospho-alpha-D-ribose 1-diphosphate + ATP + H2O = nicotinate beta-D-ribonucleotide + ADP + phosphate + diphosphate. The protein operates within cofactor biosynthesis; NAD(+) biosynthesis; nicotinate D-ribonucleotide from nicotinate: step 1/1. Its function is as follows. Catalyzes the synthesis of beta-nicotinate D-ribonucleotide from nicotinate and 5-phospho-D-ribose 1-phosphate at the expense of ATP. In Yersinia pseudotuberculosis serotype O:1b (strain IP 31758), this protein is Nicotinate phosphoribosyltransferase.